Consider the following 614-residue polypeptide: Chaperone protein DnaK (614 aa).

Phosphothreonine; by autocatalysis is present on Thr-176. The segment at 576–614 (YQQQQSQGGEAGAANGDASKKDDNTVDGDFHEVHDDDKK) is disordered. The span at 577 to 589 (QQQQSQGGEAGAA) shows a compositional bias: low complexity. Over residues 593–614 (ASKKDDNTVDGDFHEVHDDDKK) the composition is skewed to basic and acidic residues.

This sequence belongs to the heat shock protein 70 family.

Functionally, acts as a chaperone. This Fructilactobacillus sanfranciscensis (Lactobacillus sanfranciscensis) protein is Chaperone protein DnaK.